The primary structure comprises 70 residues: Potassium channel toxin kappa-KTx 2.5 (70 aa).

A signal peptide spans 1–26 (MESSRKSYVLMLFLAFVIMNVCSVSG). Positions 27–42 (EPKDGEIAGFEMEEAR) are excised as a propeptide. 2 disulfides stabilise this stretch: Cys46–Cys64 and Cys50–Cys60.

Belongs to the short scorpion toxin superfamily. Potassium channel inhibitor kappa-KTx family. Kappa-KTx 2 subfamily. Expressed by the venom gland.

The protein localises to the secreted. Its function is as follows. Voltage-independently blocks potassium currents on hKv1.1/KCNA1 (IC(50)=217 uM), and hKv1.4/KCNA4 (IC(50)=71 uM) (expressed in CHO cells). The protein is Potassium channel toxin kappa-KTx 2.5 of Opisthacanthus cayaporum (South American scorpion).